A 446-amino-acid polypeptide reads, in one-letter code: Tubulin beta-6 chain (446 aa).

GTP-binding residues include Gln11, Glu69, Ser138, Gly142, Thr143, Gly144, Asn204, and Asn226. Glu69 is a binding site for Mg(2+). The tract at residues 426 to 446 (QDATADEEEYEDEEEVQADDM) is disordered. Over residues 429 to 446 (TADEEEYEDEEEVQADDM) the composition is skewed to acidic residues.

It belongs to the tubulin family. Dimer of alpha and beta chains. A typical microtubule is a hollow water-filled tube with an outer diameter of 25 nm and an inner diameter of 15 nM. Alpha-beta heterodimers associate head-to-tail to form protofilaments running lengthwise along the microtubule wall with the beta-tubulin subunit facing the microtubule plus end conferring a structural polarity. Microtubules usually have 13 protofilaments but different protofilament numbers can be found in some organisms and specialized cells. Mg(2+) is required as a cofactor.

It is found in the cytoplasm. It localises to the cytoskeleton. In terms of biological role, tubulin is the major constituent of microtubules, a cylinder consisting of laterally associated linear protofilaments composed of alpha- and beta-tubulin heterodimers. Microtubules grow by the addition of GTP-tubulin dimers to the microtubule end, where a stabilizing cap forms. Below the cap, tubulin dimers are in GDP-bound state, owing to GTPase activity of alpha-tubulin. This Zea mays (Maize) protein is Tubulin beta-6 chain (TUBB6).